A 111-amino-acid polypeptide reads, in one-letter code: Cytochrome c (111 aa).

N-acetylalanine is present on Ala1. Residues Cys22, Cys25, and His26 each contribute to the heme c site. Lys80 carries the N6,N6,N6-trimethyllysine modification. Met88 contacts heme c. At Lys94 the chain carries N6,N6,N6-trimethyllysine.

The protein belongs to the cytochrome c family. Binds 1 heme c group covalently per subunit.

It is found in the mitochondrion intermembrane space. Electron carrier protein. The oxidized form of the cytochrome c heme group can accept an electron from the heme group of the cytochrome c1 subunit of cytochrome reductase. Cytochrome c then transfers this electron to the cytochrome oxidase complex, the final protein carrier in the mitochondrial electron-transport chain. The sequence is that of Cytochrome c from Vigna radiata var. radiata (Mung bean).